A 165-amino-acid chain; its full sequence is K(+)/H(+) antiporter subunit KhtT (165 aa).

The 86-residue stretch at 76–161 folds into the RCK C-terminal domain; that stretch reads LESIEMAFSD…LKKLIHDFLS (86 aa).

In terms of assembly, the transporter is composed of the integral membrane protein KhtU and the regulatory protein KhtT.

It is found in the cell membrane. Its activity is regulated as follows. Binds cyclic di-AMP (c-di-AMP), which may regulate the activity. Functionally, required for activity of the potassium/proton antiporter KhtU. Involved in protection of the cell from methylglyoxal, a toxic by-product of glycolysis. The protein is K(+)/H(+) antiporter subunit KhtT of Bacillus subtilis (strain 168).